A 112-amino-acid chain; its full sequence is cAMP-regulated phosphoprotein 19 (112 aa).

An N-acetylmethionine modification is found at M1. The span at 1–11 (MSAEVPEAASA) shows a compositional bias: low complexity. A disordered region spans residues 1–49 (MSAEVPEAASAEEQKEMEDKVTSPEKAEEAKLKARYPHLGQKPGGSDFL). An N-acetylserine modification is found at S2. 2 positions are modified to phosphoserine: S2 and S23. Positions 12–32 (EEQKEMEDKVTSPEKAEEAKL) are enriched in basic and acidic residues. Residues S62 and S104 each carry the phosphoserine; by GWL modification. Positions 74–112 (NKQLPAAAPDKTEVTGDHIPTPQDLPQRKPSLVASKLAG) are disordered. S104 carries the post-translational modification Phosphoserine; by PKA. Position 109 is an N6-acetyllysine (K109).

The protein belongs to the endosulfine family. As to quaternary structure, interacts (when phosphorylated at Ser-62) with PPP2R2D. Interacts with SNCA. Interacts with PPP2R2A; the interaction is direct and this interaction inhibits PP2A activity. Phosphorylation at Ser-62 by MASTL/GWL during mitosis is essential for interaction with PPP2R2D (PR55-delta) and subsequent inactivation of PP2A. Phosphorylated by PKA.

Its subcellular location is the cytoplasm. Its function is as follows. Protein phosphatase inhibitor that specifically inhibits protein phosphatase 2A (PP2A) during mitosis. Inhibition of PP2A is enhanced when ARPP19 is phosphorylated. When phosphorylated at Ser-62 during mitosis, specifically interacts with PPP2R2D (PR55-delta) and inhibits its activity, leading to inactivation of PP2A, an essential condition to keep cyclin-B1-CDK1 activity high during M phase. May indirectly enhance GAP-43 expression by binding to the NGF-regulatory region of its mRNA. This is cAMP-regulated phosphoprotein 19 (Arpp19) from Mus musculus (Mouse).